Consider the following 277-residue polypeptide: Undecaprenyl-diphosphatase (277 aa).

6 helical membrane passes run 47-67 (FNIIIQLAAILAVVWEFRGKI), 85-105 (VNLLIAFFPAVILGVLFADLI), 108-128 (WLFNPITVALALVVGGVIMLW), 183-203 (AATEFSFFLAMPTMVGAAVYS), 218-238 (VFAVGFVTSFVFAMVAVRALL), and 249-269 (FAWYRIAFGLLILATWQFHLI).

Belongs to the UppP family.

Its subcellular location is the cell inner membrane. The catalysed reaction is di-trans,octa-cis-undecaprenyl diphosphate + H2O = di-trans,octa-cis-undecaprenyl phosphate + phosphate + H(+). Functionally, catalyzes the dephosphorylation of undecaprenyl diphosphate (UPP). Confers resistance to bacitracin. The polypeptide is Undecaprenyl-diphosphatase (Pseudomonas paraeruginosa (strain DSM 24068 / PA7) (Pseudomonas aeruginosa (strain PA7))).